A 207-amino-acid polypeptide reads, in one-letter code: MTEYEYRVGDTDAGLAPAGIDQPRIEKAVREILLAIGEDPDRDGLVETPARVARAFAEQFAGLSQRPEDVLTTVFEANHEEMVLVKDIELYSTCEHHLVPFYGAAHVGYIPNTDGRITGLSKLARLVDIYARRPQVQERLTSQVADALMERLEPRGVIVVVEAEHLCMTMRGVRKPGAKTVTSAVRGAFRESYKTRAEAMDLILGRR.

Zn(2+) contacts are provided by cysteine 94, histidine 97, and cysteine 167.

This sequence belongs to the GTP cyclohydrolase I family. Toroid-shaped homodecamer, composed of two pentamers of five dimers.

It carries out the reaction GTP + H2O = 7,8-dihydroneopterin 3'-triphosphate + formate + H(+). It functions in the pathway cofactor biosynthesis; 7,8-dihydroneopterin triphosphate biosynthesis; 7,8-dihydroneopterin triphosphate from GTP: step 1/1. The polypeptide is GTP cyclohydrolase 1 (Thermobifida fusca (strain YX)).